Consider the following 447-residue polypeptide: Argininosuccinate synthase (447 aa).

Residues alanine 20 to serine 28 and alanine 46 each bind ATP. Position 102 (tyrosine 102) interacts with L-citrulline. Glycine 132 and threonine 134 together coordinate ATP. L-aspartate is bound by residues threonine 134, asparagine 138, and aspartate 139. Asparagine 138 is a binding site for L-citrulline. Aspartate 139 provides a ligand contact to ATP. Residues arginine 142 and serine 195 each contribute to the L-citrulline site. An ATP-binding site is contributed by aspartate 197. L-citrulline contacts are provided by threonine 204, glutamate 206, and glutamate 283.

It belongs to the argininosuccinate synthase family. Type 2 subfamily. In terms of assembly, homotetramer.

The protein resides in the cytoplasm. It catalyses the reaction L-citrulline + L-aspartate + ATP = 2-(N(omega)-L-arginino)succinate + AMP + diphosphate + H(+). It functions in the pathway amino-acid biosynthesis; L-arginine biosynthesis; L-arginine from L-ornithine and carbamoyl phosphate: step 2/3. The protein is Argininosuccinate synthase (argG) of Neisseria meningitidis serogroup B (strain ATCC BAA-335 / MC58).